The primary structure comprises 350 residues: 3-methylornithine synthase (350 aa).

One can recognise a Radical SAM core domain in the interval 57–279 (NRVFLNCFIY…PKRLIPASLD (223 aa)). 2 residues coordinate [4Fe-4S] cluster: Cys71 and Cys75. Residue Phe77 coordinates S-adenosyl-L-methionine. Cys78 is a [4Fe-4S] cluster binding site. Residues Asp112, Ser146, and Tyr169 each coordinate (3R)-3-methyl-D-ornithine. S-adenosyl-L-methionine is bound by residues Glu171, Arg182, and Arg190. Position 235 (Arg235) interacts with (3R)-3-methyl-D-ornithine. Residues Leu240 and Gln242 each contribute to the S-adenosyl-L-methionine site. Residues Ser277, Thr298, and Ser299 each coordinate (3R)-3-methyl-D-ornithine.

It belongs to the radical SAM superfamily. PylB family. [4Fe-4S] cluster serves as cofactor. Requires S-adenosyl-L-methionine as cofactor.

It catalyses the reaction L-lysine = (3R)-3-methyl-D-ornithine. The protein operates within amino-acid biosynthesis; L-pyrrolysine biosynthesis. Catalyzes the isomerization of L-lysine to (3R)-3-methyl-D-ornithine via a radical-based mechanism, a step in the biosynthesis pathway of pyrrolysine. Also catalyzes the reverse reaction in vitro, converting (3R)-3-methyl-D-ornithine into L-lysine. The polypeptide is 3-methylornithine synthase (Methanosarcina barkeri (strain Fusaro / DSM 804)).